The sequence spans 888 residues: Interference hedgehog (888 aa).

Positions 1 to 24 are cleaved as a signal peptide; the sequence is MSLTRFSLCLLLTLLLAAIPVYLA. Residues 25–688 lie on the Extracellular side of the membrane; it reads SPDPGVRILR…SHNETFNLNP (664 aa). Ig-like C2-type domains follow at residues 28 to 123, 134 to 215, 234 to 321, and 327 to 414; these read PGVR…ARLE, EGFK…VRLA, PHLL…SIQL, and PRIV…LQVN. 3 disulfide bridges follow: C51–C106, C155–C203, and C257–C305. 8 N-linked (GlcNAc...) asparagine glycosylation sites follow: N80, N185, N192, N281, N336, N365, N369, and N455. The cysteines at positions 348 and 396 are disulfide-linked. 2 Fibronectin type-III domains span residues 450–557 and 565–660; these read PPSA…LQRG and VPSL…TQRP. Heparin is bound by residues R486 and K493. N-linked (GlcNAc...) asparagine glycosylation is present at N516. R531 provides a ligand contact to heparin. An N-linked (GlcNAc...) asparagine glycan is attached at N547. Over residues 655–667 the composition is skewed to polar residues; it reads GRTQRPRVSTTTE. Residues 655-679 form a disordered region; the sequence is GRTQRPRVSTTTEPAVHAMDTTTPS. The N-linked (GlcNAc...) asparagine glycan is linked to N681. A helical membrane pass occupies residues 689–709; it reads LLTGTIGGGALLVLLVVSACL. At 710–888 the chain is on the cytoplasmic side; sequence CLCRRRSSRG…SSGSLNSVGV (179 aa). Disordered stretches follow at residues 759 to 789, 812 to 864, and 869 to 888; these read AQQQ…DMSY, SSSL…PGRV, and ARLS…SVGV. Residues 760–775 are compositionally biased toward low complexity; that stretch reads QQQQQQQQQQQQQQQQ. Residues 843–859 show a composition bias toward polar residues; sequence QPTDGSTADSPRLQASN. The span at 872-888 shows a compositional bias: low complexity; sequence SSRSENLSSGSLNSVGV.

Belongs to the immunoglobulin superfamily. IHOG family. As to quaternary structure, homodimer. Heterotetramer; 2 iHog chains bind 2 hh chains when facilitated by heparin, heparin is required to promote high-affinity interactions between hh and iHog.

The protein resides in the membrane. Mediates response to the active Hedgehog (Hh) protein signal in embryos, functioning upstream or at the level of patched (ptc). The sequence is that of Interference hedgehog from Drosophila grimshawi (Hawaiian fruit fly).